Reading from the N-terminus, the 138-residue chain is Large ribosomal subunit protein uL16 (138 aa).

It belongs to the universal ribosomal protein uL16 family. As to quaternary structure, part of the 50S ribosomal subunit.

In terms of biological role, binds 23S rRNA and is also seen to make contacts with the A and possibly P site tRNAs. In Anaeromyxobacter sp. (strain Fw109-5), this protein is Large ribosomal subunit protein uL16.